We begin with the raw amino-acid sequence, 87 residues long: Small ribosomal subunit protein uS17 (87 aa).

The protein belongs to the universal ribosomal protein uS17 family. As to quaternary structure, part of the 30S ribosomal subunit.

Functionally, one of the primary rRNA binding proteins, it binds specifically to the 5'-end of 16S ribosomal RNA. In Neisseria gonorrhoeae (strain ATCC 700825 / FA 1090), this protein is Small ribosomal subunit protein uS17.